The chain runs to 201 residues: FMN-dependent NADH:quinone oxidoreductase (201 aa).

Residues Ser10, 16–18, 96–99, and 140–143 each bind FMN; these read SQS, MYNF, and SRGG.

Belongs to the azoreductase type 1 family. In terms of assembly, homodimer. The cofactor is FMN.

It carries out the reaction 2 a quinone + NADH + H(+) = 2 a 1,4-benzosemiquinone + NAD(+). The enzyme catalyses N,N-dimethyl-1,4-phenylenediamine + anthranilate + 2 NAD(+) = 2-(4-dimethylaminophenyl)diazenylbenzoate + 2 NADH + 2 H(+). Its function is as follows. Quinone reductase that provides resistance to thiol-specific stress caused by electrophilic quinones. Functionally, also exhibits azoreductase activity. Catalyzes the reductive cleavage of the azo bond in aromatic azo compounds to the corresponding amines. This Yersinia pseudotuberculosis serotype O:1b (strain IP 31758) protein is FMN-dependent NADH:quinone oxidoreductase.